The following is a 974-amino-acid chain: ATP-dependent RNA helicase glh-2 (974 aa).

Positions 212–435 (HESGFGGGKS…SGFGGGNDGG (224 aa)) are disordered. Over residues 215 to 250 (GFGGGKSGGFGGGNSGGSGFGSGGNSNGFGSGGGGQ) the composition is skewed to gly residues. Over residues 256–267 (NNNCFNCQQPGH) the composition is skewed to polar residues. CCHC-type zinc fingers lie at residues 257–274 (NNCFNCQQPGHRSNDCPE) and 282–299 (RVCYNCQQPGHNSRDCPE). Basic and acidic residues-rich tracts occupy residues 268-282 (RSNDCPEPKKEREPR) and 293-307 (NSRDCPEERKPREGR). The span at 309 to 364 (GFTGGSSGFGGGNGGGTGFDSGLTNGFGSGNNGESGFGSGGFGGNSNGFGSGGGGQ) shows a compositional bias: gly residues. The segment covering 370–381 (NNNCFNCQQPGH) has biased composition (polar residues). 2 CCHC-type zinc fingers span residues 371-388 (NNCFNCQQPGHRSNDCPE) and 396-413 (RVCYNCQQPGHNSRDCPE). Basic and acidic residues-rich tracts occupy residues 382 to 396 (RSNDCPEPKKEREPR) and 407 to 421 (NSRDCPEERKPREGR). Positions 426-435 (SGFGGGNDGG) are enriched in gly residues. CCHC-type zinc fingers lie at residues 453–470 (MKCFNCKGEGHRSAECPE) and 473–490 (RGCFNCGEQGHRSNECPN). Positions 552 to 580 (KTFSEANLGETMKKNVAHAGYTKTTPIQQ) match the Q motif motif. A Helicase ATP-binding domain is found at 583 to 767 (LPLIHQGHDI…RNHLKEGYIM (185 aa)). 596–603 (AQTGSGKT) lines the ATP pocket. The DEAD box motif lies at 710 to 713 (DEAD). In terms of domain architecture, Helicase C-terminal spans 803-950 (DIDSYTTEKN…LVPEWMQGAS (148 aa)).

Belongs to the DEAD box helicase family. DDX4/VASA subfamily. As to quaternary structure, interacts (via C-terminus) with kgb-1.

The enzyme catalyses ATP + H2O = ADP + phosphate + H(+). Functionally, probable ATP-binding RNA helicase. The polypeptide is ATP-dependent RNA helicase glh-2 (glh-2) (Caenorhabditis elegans).